The following is a 257-amino-acid chain: Thiazole synthase (257 aa).

Catalysis depends on Lys-96, which acts as the Schiff-base intermediate with DXP. Residues Gly-157, 184–185, and 206–207 contribute to the 1-deoxy-D-xylulose 5-phosphate site; these read AG and NT.

The protein belongs to the ThiG family. In terms of assembly, homotetramer. Forms heterodimers with either ThiH or ThiS.

It is found in the cytoplasm. It carries out the reaction [ThiS sulfur-carrier protein]-C-terminal-Gly-aminoethanethioate + 2-iminoacetate + 1-deoxy-D-xylulose 5-phosphate = [ThiS sulfur-carrier protein]-C-terminal Gly-Gly + 2-[(2R,5Z)-2-carboxy-4-methylthiazol-5(2H)-ylidene]ethyl phosphate + 2 H2O + H(+). The protein operates within cofactor biosynthesis; thiamine diphosphate biosynthesis. In terms of biological role, catalyzes the rearrangement of 1-deoxy-D-xylulose 5-phosphate (DXP) to produce the thiazole phosphate moiety of thiamine. Sulfur is provided by the thiocarboxylate moiety of the carrier protein ThiS. In vitro, sulfur can be provided by H(2)S. The polypeptide is Thiazole synthase (Rhizobium rhizogenes (strain K84 / ATCC BAA-868) (Agrobacterium radiobacter)).